The primary structure comprises 345 residues: N-acetyl-gamma-glutamyl-phosphate reductase (345 aa).

Residue Cys-149 is part of the active site.

It belongs to the NAGSA dehydrogenase family. Type 1 subfamily.

It localises to the cytoplasm. It carries out the reaction N-acetyl-L-glutamate 5-semialdehyde + phosphate + NADP(+) = N-acetyl-L-glutamyl 5-phosphate + NADPH + H(+). Its pathway is amino-acid biosynthesis; L-arginine biosynthesis; N(2)-acetyl-L-ornithine from L-glutamate: step 3/4. Its function is as follows. Catalyzes the NADPH-dependent reduction of N-acetyl-5-glutamyl phosphate to yield N-acetyl-L-glutamate 5-semialdehyde. In Bacillus anthracis, this protein is N-acetyl-gamma-glutamyl-phosphate reductase.